The sequence spans 258 residues: MRLTPLPAFDNNYIWTLIAPDGRAIIVDPGQALPILEAHSKGLIPTAILLTHHHADHIGGVPELLERWPTLPVYAPHDTRIALNYHRIGEGDSLNILGMRFQVIHTPGHTHSHLTFIGNDLLFCGDTLFSLGCGQIFEGTPTQMLASLQRLAALPIQTRVCCGHEYTLSNAAFALHVDPTNTALQKRRQQANAMRLAGLPTLPISLESELNTNPFLRTAAPTIHAATATHLQRTPIDEVEVFATLRHWKNNFPIKNIP.

Residues histidine 52, histidine 54, aspartate 56, histidine 57, histidine 109, aspartate 126, and histidine 164 each coordinate Zn(2+).

The protein belongs to the metallo-beta-lactamase superfamily. Glyoxalase II family. In terms of assembly, monomer. The cofactor is Zn(2+).

It catalyses the reaction an S-(2-hydroxyacyl)glutathione + H2O = a 2-hydroxy carboxylate + glutathione + H(+). The protein operates within secondary metabolite metabolism; methylglyoxal degradation; (R)-lactate from methylglyoxal: step 2/2. Functionally, thiolesterase that catalyzes the hydrolysis of S-D-lactoyl-glutathione to form glutathione and D-lactic acid. This chain is Hydroxyacylglutathione hydrolase, found in Xylella fastidiosa (strain M23).